The primary structure comprises 794 residues: Protein SEY1 (794 aa).

Residues 1-687 (MMEVIDSVLG…KRSIIKTTTA (687 aa)) are Cytoplasmic-facing. The GB1/RHD3-type G domain occupies 43-272 (GLDYHVISVF…ANPYYFKPQY (230 aa)). Residue 53-60 (GSQSSGKS) participates in GTP binding. Positions 331–352 (VDHILDDREKLGEVLKNLKQEC) form a coiled coil. The helical transmembrane segment at 688–708 (IPIWMYLLVVALGWNEFVMVL) threads the bilayer. Over 709–711 (RNP) the chain is Lumenal. A helical transmembrane segment spans residues 712-732 (LLVTLVLLFGVGFIFVNKFGL). Residues 733-794 (WGPVLNVAHN…SDNEKIEKSE (62 aa)) are Cytoplasmic-facing. The tract at residues 770 to 794 (NSAGKESYEMKDMSDSDNEKIEKSE) is disordered. Over residues 775 to 794 (ESYEMKDMSDSDNEKIEKSE) the composition is skewed to basic and acidic residues.

It belongs to the TRAFAC class dynamin-like GTPase superfamily. GB1/RHD3 GTPase family. RHD3 subfamily.

It localises to the endoplasmic reticulum membrane. In terms of biological role, cooperates with the reticulon proteins and tubule-shaping DP1 family proteins to generate and maintain the structure of the tubular endoplasmic reticulum network. Has GTPase activity, which is required for its function in ER organization. The sequence is that of Protein SEY1 from Zygosaccharomyces rouxii (strain ATCC 2623 / CBS 732 / NBRC 1130 / NCYC 568 / NRRL Y-229).